We begin with the raw amino-acid sequence, 23 residues long: Paralytic peptide 2 (23 aa).

C7 and C19 form a disulfide bridge.

The protein belongs to the GBP/PSP1/paralytic peptide family. Hemolymph.

Causes rapid, rigid paralysis when injected into Lepidopteran larvae. The physiological role may be to reduce hemolymph loss following injury and promote wound healing. This chain is Paralytic peptide 2, found in Manduca sexta (Tobacco hawkmoth).